The primary structure comprises 121 residues: MTAMEFLPVLFMVTGIVLVAAATLFVSSLLRPSNPYPEKNAPYECGMEAAGEAAGGRFRVPFFILAILLVVFDVEAMFLFPWAVVLKEIGFVGYIEMFVFMLLLLVGFAYAWLKGALEWQE.

3 consecutive transmembrane segments (helical) span residues 6–26 (FLPVLFMVTGIVLVAAATLFV), 60–80 (VPFFILAILLVVFDVEAMFLF), and 89–109 (IGFVGYIEMFVFMLLLLVGFA).

It belongs to the complex I subunit 3 family. As to quaternary structure, NDH-1 is composed of 14 different subunits. Subunits NuoA, H, J, K, L, M, N constitute the membrane sector of the complex.

Its subcellular location is the cell inner membrane. It carries out the reaction a quinone + NADH + 5 H(+)(in) = a quinol + NAD(+) + 4 H(+)(out). NDH-1 shuttles electrons from NADH, via FMN and iron-sulfur (Fe-S) centers, to quinones in the respiratory chain. The immediate electron acceptor for the enzyme in this species is believed to be ubiquinone. Couples the redox reaction to proton translocation (for every two electrons transferred, four hydrogen ions are translocated across the cytoplasmic membrane), and thus conserves the redox energy in a proton gradient. The polypeptide is NADH-quinone oxidoreductase subunit A 2 (Rhizobium meliloti (strain 1021) (Ensifer meliloti)).